The chain runs to 404 residues: Endophilin-B2 (404 aa).

Methionine 1 is subject to N-acetylmethionine. The segment at 1–27 (MDFNMKKLASDAGIFFTRAVQFTEEKF) is membrane-binding amphipathic helix. A Phosphoserine modification is found at serine 10. The BAR domain maps to 24–291 (EEKFGQAEKT…LGSSQGAIFP (268 aa)). The stretch at 209-239 (SASALWNDEVDKAEQELRAAQTEFDRQAEVT) forms a coiled coil. Residues 344–404 (SGTRKARVLY…VPVTYLELLS (61 aa)) form the SH3 domain. Serine 404 is modified (phosphoserine).

It belongs to the endophilin family. As to quaternary structure, homodimer, and heterodimer with SH3GLB1.

It localises to the cytoplasm. This Rattus norvegicus (Rat) protein is Endophilin-B2.